A 143-amino-acid chain; its full sequence is Acyl carrier protein 3, chloroplastic (143 aa).

Residues 1–60 (MATAAAGSSLICIKSASCSLNRAQVPSGLSSLRSVSLPISGKIFPSLRSSRGPLSFRVCC) constitute a chloroplast transit peptide. Residues 64–139 (QETVTRVCEI…DAADLIEKLV (76 aa)) form the Carrier domain. An O-(pantetheine 4'-phosphoryl)serine modification is found at S99.

This sequence belongs to the acyl carrier protein (ACP) family. Post-translationally, 4'-phosphopantetheine is transferred from CoA to a specific serine of apo-ACP by acpS. This modification is essential for activity because fatty acids are bound in thioester linkage to the sulfhydryl of the prosthetic group.

It localises to the plastid. Its subcellular location is the chloroplast. It participates in lipid metabolism; fatty acid biosynthesis. Carrier of the growing fatty acid chain in fatty acid biosynthesis. This Cuphea lanceolata (Cigar flower) protein is Acyl carrier protein 3, chloroplastic (ACL1.3).